A 254-amino-acid chain; its full sequence is Type III pantothenate kinase (254 aa).

D6 to V13 contributes to the ATP binding site. Substrate contacts are provided by residues F100 and G107–R110. D109 (proton acceptor) is an active-site residue. D129 serves as a coordination point for K(+). T132 is an ATP binding site. Substrate is bound at residue T184.

The protein belongs to the type III pantothenate kinase family. In terms of assembly, homodimer. Requires NH4(+) as cofactor. K(+) serves as cofactor.

The protein resides in the cytoplasm. It carries out the reaction (R)-pantothenate + ATP = (R)-4'-phosphopantothenate + ADP + H(+). It functions in the pathway cofactor biosynthesis; coenzyme A biosynthesis; CoA from (R)-pantothenate: step 1/5. Catalyzes the phosphorylation of pantothenate (Pan), the first step in CoA biosynthesis. The protein is Type III pantothenate kinase of Moorella thermoacetica (strain ATCC 39073 / JCM 9320).